Consider the following 538-residue polypeptide: Putative cysteine ligase BshC (538 aa).

The stretch at 462–533 (LDHLEKRLLK…DPLESNFKIL (72 aa)) forms a coiled coil.

The protein belongs to the BshC family.

This Christiangramia forsetii (strain DSM 17595 / CGMCC 1.15422 / KT0803) (Gramella forsetii) protein is Putative cysteine ligase BshC.